Consider the following 101-residue polypeptide: Small ribosomal subunit protein uS14m (101 aa).

It belongs to the universal ribosomal protein uS14 family. As to quaternary structure, component of the mitochondrial ribosome small subunit (28S) which comprises a 12S rRNA and about 30 distinct proteins. Interacts with LIAT1.

Its subcellular location is the mitochondrion. The sequence is that of Small ribosomal subunit protein uS14m (mrps14) from Dictyostelium citrinum (Slime mold).